A 100-amino-acid chain; its full sequence is Succinate dehydrogenase assembly factor 4, mitochondrial (100 aa).

The N-terminal 31 residues, 1-31 (MFNRNLRAVILKNYNKALTRCLHDAGNLKRP), are a transit peptide targeting the mitochondrion. The disordered stretch occupies residues 24–100 (DAGNLKRPTP…YSYEGRVTDF (77 aa)). 2 stretches are compositionally biased toward basic and acidic residues: residues 36–68 (LPKE…KDFE) and 85–100 (PTVH…VTDF).

Belongs to the SDHAF4 family. In terms of assembly, interacts with sdh1 in its FAD-bound form.

It localises to the mitochondrion matrix. Plays an essential role in the assembly of succinate dehydrogenase (SDH), an enzyme complex (also referred to as respiratory complex II) that is a component of both the tricarboxylic acid (TCA) cycle and the mitochondrial electron transport chain, and which couples the oxidation of succinate to fumarate with the reduction of ubiquinone (coenzyme Q) to ubiquinol. Binds to the flavoprotein subunit sdh1 in its FAD-bound form, blocking the generation of excess reactive oxygen species (ROS) and facilitating its assembly with the iron-sulfur protein subunit sdh2 into the SDH catalytic dimer. The polypeptide is Succinate dehydrogenase assembly factor 4, mitochondrial (Schizosaccharomyces pombe (strain 972 / ATCC 24843) (Fission yeast)).